The chain runs to 154 residues: Protein phosphatase 1 regulatory subunit 27 (154 aa).

ANK repeat units follow at residues 63–92 (SGLA…DIHQ) and 96–125 (AGWT…DRDA).

Interacts with DYSF and PPP1CA.

In terms of biological role, inhibits phosphatase activity of protein phosphatase 1 (PP1) complexes. The protein is Protein phosphatase 1 regulatory subunit 27 (PPP1R27) of Homo sapiens (Human).